The chain runs to 195 residues: Interferon tau-11 (195 aa).

The first 23 residues, methionine 1–glycine 23, serve as a signal peptide directing secretion. Cystine bridges form between cysteine 24-cysteine 122 and cysteine 52-cysteine 162. A glycan (N-linked (GlcNAc...) asparagine) is linked at asparagine 101.

Belongs to the alpha/beta interferon family. IFN-alphaII subfamily. Constitutively and exclusively expressed in the mononuclear cells of the extraembryonic trophectoderm.

The protein resides in the secreted. Its function is as follows. Paracrine hormone primarily responsible for maternal recognition of pregnancy. Interacts with endometrial receptors, probably type I interferon receptors, and blocks estrogen receptor expression, preventing the estrogen-induced increase in oxytocin receptor expression in the endometrium. This results in the suppression of the pulsatile endometrial release of the luteolytic hormone prostaglandin F2-alpha, hindering the regression of the corpus luteum (luteolysis) and therefore a return to ovarian cyclicity. This, and a possible direct effect of IFN-tau on prostaglandin synthesis, leads in turn to continued ovarian progesterone secretion, which stimulates the secretion by the endometrium of the nutrients required for the growth of the conceptus. In summary, displays particularly high antiviral and antiproliferative potency concurrently with particular weak cytotoxicity, high antiluteolytic activity and immunomodulatory properties. In contrast with other IFNs, IFN-tau is not virally inducible. The polypeptide is Interferon tau-11 (IFNT11) (Ovis aries (Sheep)).